An 826-amino-acid polypeptide reads, in one-letter code: Sister chromatid cohesion protein PDS5 homolog D (826 aa).

5 HEAT repeats span residues glycine 18–glutamine 54, serine 55–proline 94, aspartate 151–glutamate 188, glutamine 189–arginine 226, and proline 230–valine 267. Disordered stretches follow at residues proline 261–serine 551 and lysine 640–serine 826. Composition is skewed to basic and acidic residues over residues threonine 269–leucine 286 and arginine 296–arginine 309. The short motif at serine 281–lysine 288 is the Nuclear localization signal 1 element. A compositionally biased stretch (polar residues) spans glycine 311–glutamine 323. The Nuclear localization signal 2 motif lies at glycine 357–threonine 364. Residues serine 396–leucine 408 are compositionally biased toward polar residues. The HEAT 6 repeat unit spans residues serine 424–asparagine 461. The segment covering phenylalanine 437–isoleucine 450 has biased composition (basic and acidic residues). The segment covering glycine 451–lysine 460 has biased composition (polar residues). Low complexity predominate over residues asparagine 644–threonine 663. The span at methionine 665–glutamate 701 shows a compositional bias: basic and acidic residues. The segment covering glutamate 702–cysteine 724 has biased composition (acidic residues). A compositionally biased stretch (basic and acidic residues) spans serine 725 to glutamine 746. 3 stretches are compositionally biased toward acidic residues: residues glycine 752 to glutamate 763, aspartate 771 to aspartate 800, and glutamate 811 to serine 826. Positions threonine 770–lysine 825 form a coiled coil.

This sequence belongs to the PDS5 family. As to quaternary structure, interacts with the cohesin complex.

The protein localises to the nucleus. Functionally, cohesin cofactor dispensable during the meiotic division but playing an important role in DNA repair by homologous recombination (HR) probably by helping SMC5/SMC6 complex. Regulator of sister chromatid cohesion in mitosis which may stabilize cohesin complex association with chromatin. May couple sister chromatid cohesion during mitosis to DNA replication. Cohesion ensures that chromosome partitioning is accurate in both meiotic and mitotic cells and plays an important role in DNA repair. The polypeptide is Sister chromatid cohesion protein PDS5 homolog D (Arabidopsis thaliana (Mouse-ear cress)).